The sequence spans 296 residues: tRNA dimethylallyltransferase (296 aa).

2–9 (GPTASGKT) serves as a coordination point for ATP. 4 to 9 (TASGKT) lines the substrate pocket. Interaction with substrate tRNA stretches follow at residues 27 to 30 (DSAL), 151 to 155 (QRLSR), and 232 to 237 (RCVGYR).

Belongs to the IPP transferase family. In terms of assembly, monomer. It depends on Mg(2+) as a cofactor.

It catalyses the reaction adenosine(37) in tRNA + dimethylallyl diphosphate = N(6)-dimethylallyladenosine(37) in tRNA + diphosphate. Catalyzes the transfer of a dimethylallyl group onto the adenine at position 37 in tRNAs that read codons beginning with uridine, leading to the formation of N6-(dimethylallyl)adenosine (i(6)A). This Shewanella sp. (strain ANA-3) protein is tRNA dimethylallyltransferase.